A 137-amino-acid chain; its full sequence is Small ribosomal subunit protein uS12 (137 aa).

A 3-methylthioaspartic acid modification is found at aspartate 89. Positions 104-137 are disordered; sequence TAGVNGRKQSRSKYGAKRPKPGQAAAAPAKGKKK. Residues 111-123 are compositionally biased toward basic residues; sequence KQSRSKYGAKRPK. Low complexity predominate over residues 124 to 137; that stretch reads PGQAAAAPAKGKKK.

It belongs to the universal ribosomal protein uS12 family. Part of the 30S ribosomal subunit. Contacts proteins S8 and S17. May interact with IF1 in the 30S initiation complex.

In terms of biological role, with S4 and S5 plays an important role in translational accuracy. Its function is as follows. Interacts with and stabilizes bases of the 16S rRNA that are involved in tRNA selection in the A site and with the mRNA backbone. Located at the interface of the 30S and 50S subunits, it traverses the body of the 30S subunit contacting proteins on the other side and probably holding the rRNA structure together. The combined cluster of proteins S8, S12 and S17 appears to hold together the shoulder and platform of the 30S subunit. The chain is Small ribosomal subunit protein uS12 from Cytophaga hutchinsonii (strain ATCC 33406 / DSM 1761 / CIP 103989 / NBRC 15051 / NCIMB 9469 / D465).